Consider the following 244-residue polypeptide: MNKKNIKDSQNFITSKHHINEILRNVHLNTNDNIIEIGSGKGHFSFELAKRCNYVTAIEIDPKLCRITKNKLIEYENFQVINKDILQFKFPKNKSYKIFGNIPYNISTDIIRKIVFESTATESYLIVEYGFAKRLLNTNRSLALFLMTEVDISILSKIPREYFHPKPRVNSSLIVLKRHPSKISLKDRKQYENFVMKWVNKEYIKLFSKNQFYQALKYARIDDLNNISFEQFLSLFNSYKLFNR.

Residues asparagine 11, isoleucine 13, glycine 38, glutamate 59, aspartate 84, and asparagine 101 each contribute to the S-adenosyl-L-methionine site.

It belongs to the class I-like SAM-binding methyltransferase superfamily. rRNA adenine N(6)-methyltransferase family.

It catalyses the reaction adenosine(2085) in 23S rRNA + 2 S-adenosyl-L-methionine = N(6)-dimethyladenosine(2085) in 23S rRNA + 2 S-adenosyl-L-homocysteine + 2 H(+). Its function is as follows. This protein produces a dimethylation of the adenine residue at position 2085 in 23S rRNA, resulting in reduced affinity between ribosomes and macrolide-lincosamide-streptogramin B antibiotics. Is involved in erythromycin resistance. The protein is rRNA adenine N-6-methyltransferase (ermGT) of Limosilactobacillus reuteri (Lactobacillus reuteri).